Reading from the N-terminus, the 520-residue chain is GMP synthase [glutamine-hydrolyzing] (520 aa).

Positions 13–205 (KIIVLDYGSQ…ALNICKAKGD (193 aa)) constitute a Glutamine amidotransferase type-1 domain. The Nucleophile role is filled by C90. Catalysis depends on residues H179 and E181. The GMPS ATP-PPase domain maps to 206-395 (WSMDNFIDMQ…LGMPDHIVWR (190 aa)). An ATP-binding site is contributed by 233 to 239 (SGGVDSS).

In terms of assembly, homodimer.

It carries out the reaction XMP + L-glutamine + ATP + H2O = GMP + L-glutamate + AMP + diphosphate + 2 H(+). It participates in purine metabolism; GMP biosynthesis; GMP from XMP (L-Gln route): step 1/1. Functionally, catalyzes the synthesis of GMP from XMP. This Streptococcus pneumoniae (strain ATCC 700669 / Spain 23F-1) protein is GMP synthase [glutamine-hydrolyzing].